A 468-amino-acid chain; its full sequence is Ribulose bisphosphate carboxylase large chain (468 aa).

K5 bears the N6,N6,N6-trimethyllysine mark. Substrate-binding residues include N114 and T164. K166 acts as the Proton acceptor in catalysis. K168 contributes to the substrate binding site. Positions 192, 194, and 195 each coordinate Mg(2+). Position 192 is an N6-carboxylysine (K192). The active-site Proton acceptor is H285. Residues R286, H318, and S370 each contribute to the substrate site.

The protein belongs to the RuBisCO large chain family. Type I subfamily. In terms of assembly, heterohexadecamer of 8 large chains and 8 small chains; disulfide-linked. The disulfide link is formed within the large subunit homodimers. It depends on Mg(2+) as a cofactor. Post-translationally, the disulfide bond which can form in the large chain dimeric partners within the hexadecamer appears to be associated with oxidative stress and protein turnover.

It is found in the plastid. The protein localises to the chloroplast. It carries out the reaction 2 (2R)-3-phosphoglycerate + 2 H(+) = D-ribulose 1,5-bisphosphate + CO2 + H2O. The catalysed reaction is D-ribulose 1,5-bisphosphate + O2 = 2-phosphoglycolate + (2R)-3-phosphoglycerate + 2 H(+). Functionally, ruBisCO catalyzes two reactions: the carboxylation of D-ribulose 1,5-bisphosphate, the primary event in carbon dioxide fixation, as well as the oxidative fragmentation of the pentose substrate in the photorespiration process. Both reactions occur simultaneously and in competition at the same active site. This Catesbaea spinosa protein is Ribulose bisphosphate carboxylase large chain.